The primary structure comprises 253 residues: tRNA pseudouridine synthase A (253 aa).

The Nucleophile role is filled by D53. Position 111 (Y111) interacts with substrate.

The protein belongs to the tRNA pseudouridine synthase TruA family. As to quaternary structure, homodimer.

The enzyme catalyses uridine(38/39/40) in tRNA = pseudouridine(38/39/40) in tRNA. In terms of biological role, formation of pseudouridine at positions 38, 39 and 40 in the anticodon stem and loop of transfer RNAs. This chain is tRNA pseudouridine synthase A, found in Chlorobium luteolum (strain DSM 273 / BCRC 81028 / 2530) (Pelodictyon luteolum).